Consider the following 750-residue polypeptide: MIIRSPEPEVKILVDRDPVKTSFEEWARPGHFSRTIAKGPDTTTWIWNLHADAHDFDSHTSDLEEISRKVFSAHFGQLSIIFLWLSGMYFHGARFSNYEAWLSDPTHIGPSAQVVWPIVGQEILNGDVGGGFRGIQITSGFFQIWRASGITSELQLYCTAIGALVFAALMLFAGWFHYHKAAPKLAWFQDVESMLNHHLAGLLGLGSLSWAGHQVHVSLPINQFLNAGVDPKEIPLPHEFILNRDLLAQLYPSFAEGATPFFTLNWSKYADFLTFRGGLDPVTGGLWLTDIAHHHLAIAILFLIAGHMYRTNWGIGHGLKDILEAHKGPFTGQGHKGLYEILTTSWHAQLSLNLAMLGSLTIVVAHHMYSMPPYPYLATDYGTQLSLFTHHMWIGGFLIVGAAAHAAIFMVRDYDPTTRYNDLLDRVLRHRDAIISHLNWACIFLGFHSFGLYIHNDTMSALGRPQDMFSDTAIQLQPVFAQWIQNTHALAPGATAPGATASTSLTWGGGDLVAVGGKVALLPIPLGTADFLVHHIHAFTIHVTVLILLKGVLFARSSRLIPDKANLGFRFPCDGPGRGGTCQVSAWDHVFLGLFWMYNAISVVIFHFSWKMQSDVWGSVSDQGVVTHITGGNFAQSSITINGWLRDFLWAQASQVIQSYGSSLSAYGLFFLGAHFVWAFSLMFLFSGRGYWQELIESIVWAHNKLKVAPATQPRALSIIQGRAVGVTHYLLGGIATTWAFFLARIIAVG.

The next 8 membrane-spanning stretches (helical) occupy residues 70–93 (VFSAHFGQLSIIFLWLSGMYFHGA), 156–179 (LYCTAIGALVFAALMLFAGWFHYH), 195–219 (LNHHLAGLLGLGSLSWAGHQVHVSL), 291–309 (IAHHHLAIAILFLIAGHMY), 346–369 (WHAQLSLNLAMLGSLTIVVAHHMY), 385–411 (LSLFTHHMWIGGFLIVGAAAHAAIFMV), 433–455 (AIISHLNWACIFLGFHSFGLYIH), and 531–549 (FLVHHIHAFTIHVTVLILL). [4Fe-4S] cluster contacts are provided by Cys573 and Cys582. 2 helical membrane passes run 589–610 (HVFLGLFWMYNAISVVIFHFSW) and 664–686 (LSAYGLFFLGAHFVWAFSLMFLF). His675 provides a ligand contact to chlorophyll a'. Chlorophyll a is bound by residues Met683 and Tyr691. Trp692 is a phylloquinone binding site. The helical transmembrane segment at 724 to 744 (AVGVTHYLLGGIATTWAFFLA) threads the bilayer.

This sequence belongs to the PsaA/PsaB family. The PsaA/B heterodimer binds the P700 chlorophyll special pair and subsequent electron acceptors. PSI consists of a core antenna complex that captures photons, and an electron transfer chain that converts photonic excitation into a charge separation. The eukaryotic PSI reaction center is composed of at least 11 subunits. It depends on P700 is a chlorophyll a/chlorophyll a' dimer, A0 is one or more chlorophyll a, A1 is one or both phylloquinones and FX is a shared 4Fe-4S iron-sulfur center. as a cofactor.

Its subcellular location is the plastid. It localises to the chloroplast thylakoid membrane. The enzyme catalyses reduced [plastocyanin] + hnu + oxidized [2Fe-2S]-[ferredoxin] = oxidized [plastocyanin] + reduced [2Fe-2S]-[ferredoxin]. Its function is as follows. PsaA and PsaB bind P700, the primary electron donor of photosystem I (PSI), as well as the electron acceptors A0, A1 and FX. PSI is a plastocyanin-ferredoxin oxidoreductase, converting photonic excitation into a charge separation, which transfers an electron from the donor P700 chlorophyll pair to the spectroscopically characterized acceptors A0, A1, FX, FA and FB in turn. Oxidized P700 is reduced on the lumenal side of the thylakoid membrane by plastocyanin. The sequence is that of Photosystem I P700 chlorophyll a apoprotein A1 from Nicotiana sylvestris (Wood tobacco).